Consider the following 192-residue polypeptide: Transcription termination/antitermination protein NusG (192 aa).

Residues 140–168 (VGEIVTVTDGPFETFMGTVEEIDQEKNRL) enclose the KOW domain.

The protein belongs to the NusG family.

Participates in transcription elongation, termination and antitermination. The chain is Transcription termination/antitermination protein NusG from Rickettsia conorii (strain ATCC VR-613 / Malish 7).